Consider the following 170-residue polypeptide: Bifunctional protein PyrR (170 aa).

Residues 90-102 (LVLIDDVLMSGRT) carry the PRPP-binding motif.

The protein belongs to the purine/pyrimidine phosphoribosyltransferase family. PyrR subfamily.

The catalysed reaction is UMP + diphosphate = 5-phospho-alpha-D-ribose 1-diphosphate + uracil. Regulates the transcription of the pyrimidine nucleotide (pyr) operon in response to exogenous pyrimidines. In terms of biological role, also displays a weak uracil phosphoribosyltransferase activity which is not physiologically significant. This chain is Bifunctional protein PyrR, found in Pseudomonas syringae pv. syringae (strain B728a).